The following is a 103-amino-acid chain: Small ribosomal subunit protein uS10 (103 aa).

Belongs to the universal ribosomal protein uS10 family. Part of the 30S ribosomal subunit.

Functionally, involved in the binding of tRNA to the ribosomes. This chain is Small ribosomal subunit protein uS10, found in Magnetococcus marinus (strain ATCC BAA-1437 / JCM 17883 / MC-1).